The sequence spans 303 residues: Probable cell division protein WhiA (303 aa).

The H-T-H motif DNA-binding region spans 272–303 (SIQQLADSLSTPLTKSGVNHRLRKINKIADEL).

The protein belongs to the WhiA family.

Involved in cell division and chromosome segregation. The chain is Probable cell division protein WhiA from Streptococcus pneumoniae serotype 4 (strain ATCC BAA-334 / TIGR4).